The following is a 353-amino-acid chain: 11-beta-hydroxysteroid dehydrogenase B (353 aa).

A helical; Signal-anchor for type II membrane protein transmembrane segment spans residues 10–30; sequence LFVPPASLITLAFSWPALCFP. The Proline-knob motif lies at 13–26; that stretch reads PPASLITLAFSWPA. Residues 54–80 and Asp105 contribute to the NADP(+) site; that span reads GASSGIGEQIAYEYALRRACLVLVARR. Ser184 is a substrate binding site. Catalysis depends on Tyr197, which acts as the Proton acceptor. Residues 197–201 and Lys201 each bind NADP(+); that span reads YAAAK.

It belongs to the short-chain dehydrogenases/reductases (SDR) family. As to expression, expressed in seeds (at protein level).

The protein resides in the lipid droplet. Its subcellular location is the membrane. The catalysed reaction is an 11beta-hydroxysteroid + NADP(+) = an 11-oxosteroid + NADPH + H(+). Functionally, has dehydrogenase activity against 11 beta-hydroxysteroid and 17 beta-hydroxysteroid. May be involved in signal transduction regulated by various sterols. In Arachis hypogaea (Peanut), this protein is 11-beta-hydroxysteroid dehydrogenase B.